Reading from the N-terminus, the 569-residue chain is Urease subunit alpha (569 aa).

Positions 136, 138, and 219 each coordinate Ni(2+). An N6-carboxylysine modification is found at lysine 219. Histidine 221 provides a ligand contact to substrate. Histidine 248 and histidine 274 together coordinate Ni(2+). Residue histidine 322 is the Proton donor of the active site. Aspartate 362 serves as a coordination point for Ni(2+).

It belongs to the metallo-dependent hydrolases superfamily. Urease alpha subunit family. Heterotrimer of UreA (gamma), UreB (beta) and UreC (alpha) subunits. Three heterotrimers associate to form the active enzyme. It depends on Ni cation as a cofactor. Post-translationally, carboxylation allows a single lysine to coordinate two nickel ions.

It localises to the cytoplasm. The catalysed reaction is urea + 2 H2O + H(+) = hydrogencarbonate + 2 NH4(+). The protein operates within nitrogen metabolism; urea degradation; CO(2) and NH(3) from urea (urease route): step 1/1. The chain is Urease subunit alpha from Dinoroseobacter shibae (strain DSM 16493 / NCIMB 14021 / DFL 12).